Consider the following 189-residue polypeptide: Elongation factor P (189 aa).

Belongs to the elongation factor P family.

Its subcellular location is the cytoplasm. It participates in protein biosynthesis; polypeptide chain elongation. Involved in peptide bond synthesis. Stimulates efficient translation and peptide-bond synthesis on native or reconstituted 70S ribosomes in vitro. Probably functions indirectly by altering the affinity of the ribosome for aminoacyl-tRNA, thus increasing their reactivity as acceptors for peptidyl transferase. This is Elongation factor P from Campylobacter fetus subsp. fetus (strain 82-40).